We begin with the raw amino-acid sequence, 478 residues long: Protein trichome birefringence-like 20 (478 aa).

A helical; Signal-anchor for type II membrane protein transmembrane segment spans residues 10–30; it reads IGLVIFPLILLTIAPILYLFF. Residues 50-68 show a composition bias toward low complexity; sequence SSAISSPSRYNHSSSSSDS. The interval 50 to 125 is disordered; sequence SSAISSPSRY…KEHRRKKRKR (76 aa). Residues 92–110 are compositionally biased toward polar residues; the sequence is SSSLHNNDRLSISSSNGHH. Basic residues predominate over residues 112–125; the sequence is VTPKKEHRRKKRKR. Positions 200-202 match the GDS motif motif; it reads GDS. The DCXHWCLPGXXDXWN motif signature appears at 447 to 461; that stretch reads DCVHWCLPGPIDSWN.

This sequence belongs to the PC-esterase family. TBL subfamily.

The protein resides in the membrane. In terms of biological role, may act as a bridging protein that binds pectin and other cell wall polysaccharides. Probably involved in maintaining esterification of pectins. May be involved in the specific O-acetylation of cell wall polymers. In Arabidopsis thaliana (Mouse-ear cress), this protein is Protein trichome birefringence-like 20 (TBL20).